The primary structure comprises 182 residues: MTELVNITELLLSRIRDVRDYPEPGVVFKDITPLLADPAAFTALTGALAELTVRHGATKIVGLEARGFILGAPAAVQAGVGFIPVRKAGKLPGATLSQSYDLEYGSAEIEVHAEDLVAGDRVMVVDDVLATGGTAEASLQLIRRAGAEVAGVSVLMELGFLGGRARLEPALAGAPLEALLQI.

This sequence belongs to the purine/pyrimidine phosphoribosyltransferase family. In terms of assembly, homodimer.

The protein localises to the cytoplasm. The enzyme catalyses AMP + diphosphate = 5-phospho-alpha-D-ribose 1-diphosphate + adenine. The protein operates within purine metabolism; AMP biosynthesis via salvage pathway; AMP from adenine: step 1/1. Functionally, catalyzes a salvage reaction resulting in the formation of AMP, that is energically less costly than de novo synthesis. In Streptomyces avermitilis (strain ATCC 31267 / DSM 46492 / JCM 5070 / NBRC 14893 / NCIMB 12804 / NRRL 8165 / MA-4680), this protein is Adenine phosphoribosyltransferase.